The following is a 691-amino-acid chain: Pentatricopeptide repeat-containing protein At5g27110 (691 aa).

PPR repeat units follow at residues 38–68, 70–104, 106–140, 141–171, 172–206, 207–241, 242–272, 273–307, 308–342, 343–373, 374–408, 409–443, 444–474, 475–509, 510–540, and 546–576; these read DVVLCKSLINVYFTCKDHCSARHVFENFDIR, DVYIWNSLMSGYSKNSMFHDTLEVFKRLLNCSICV, DSFTFPNVIKAYGALGREFLGRMIHTLVVKSGYVC, DVVVASSLVGMYAKFNLFENSLQVFDEMPER, DVASWNTVISCFYQSGEAEKALELFGRMESSGFEP, NSVSLTVAISACSRLLWLERGKEIHRKCVKKGFEL, DEYVNSALVDMYGKCDCLEVAREVFQKMPRK, SLVAWNSMIKGYVAKGDSKSCVEILNRMIIEGTRP, SQTTLTSILMACSRSRNLLHGKFIHGYVIRSVVNA, DIYVNCSLIDLYFKCGEANLAETVFSKTQKD, VAESWNVMISSYISVGNWFKAVEVYDQMVSVGVKP, DVVTFTSVLPACSQLAALEKGKQIHLSISESRLET, DELLLSALLDMYSKCGNEKEAFRIFNSIPKK, DVVSWTVMISAYGSHGQPREALYQFDEMQKFGLKP, DGVTLLAVLSACGHAGLIDEGLKFFSQMRSK, and IIEHYSCMIDILGRAGRLLEAYEIIQQTPET. The type E motif stretch occupies residues 582-657; sequence LLSTLFSACC…KPGCSWIEMS (76 aa). The interval 658–688 is type E(+) motif; it reads DKVCHFFAEDRSHLRAENVYECLALLSGHME.

Belongs to the PPR family. PCMP-E subfamily.

The polypeptide is Pentatricopeptide repeat-containing protein At5g27110 (PCMP-E14) (Arabidopsis thaliana (Mouse-ear cress)).